The sequence spans 396 residues: Tryptophan synthase beta chain (396 aa).

The residue at position 88 (K88) is an N6-(pyridoxal phosphate)lysine.

It belongs to the TrpB family. Tetramer of two alpha and two beta chains. Pyridoxal 5'-phosphate is required as a cofactor.

The enzyme catalyses (1S,2R)-1-C-(indol-3-yl)glycerol 3-phosphate + L-serine = D-glyceraldehyde 3-phosphate + L-tryptophan + H2O. The protein operates within amino-acid biosynthesis; L-tryptophan biosynthesis; L-tryptophan from chorismate: step 5/5. The beta subunit is responsible for the synthesis of L-tryptophan from indole and L-serine. The chain is Tryptophan synthase beta chain from Actinobacillus pleuropneumoniae serotype 7 (strain AP76).